A 169-amino-acid polypeptide reads, in one-letter code: Orotate phosphoribosyltransferase (169 aa).

5-phospho-alpha-D-ribose 1-diphosphate contacts are provided by residues Arg86, Lys90, His92, and 111 to 119; that span reads EDVTTSGGS. Orotate contacts are provided by Thr115 and Arg143.

The protein belongs to the purine/pyrimidine phosphoribosyltransferase family. PyrE subfamily. In terms of assembly, homodimer. Mg(2+) serves as cofactor.

The enzyme catalyses orotidine 5'-phosphate + diphosphate = orotate + 5-phospho-alpha-D-ribose 1-diphosphate. The protein operates within pyrimidine metabolism; UMP biosynthesis via de novo pathway; UMP from orotate: step 1/2. Its function is as follows. Catalyzes the transfer of a ribosyl phosphate group from 5-phosphoribose 1-diphosphate to orotate, leading to the formation of orotidine monophosphate (OMP). The sequence is that of Orotate phosphoribosyltransferase from Methanocorpusculum labreanum (strain ATCC 43576 / DSM 4855 / Z).